A 208-amino-acid chain; its full sequence is Coiled-coil domain-containing protein 25 (208 aa).

Over 1 to 105 the chain is Extracellular; sequence MVFYFTSSSV…SNLKKTADMD (105 aa). Residues 21–25 form a DNA-binding region; it reads KDKYE. Residue Lys-23 is modified to N6-acetyllysine. A helical membrane pass occupies residues 106 to 122; it reads VGQIGFHRQKDVKIVTV. A coiled-coil region spans residues 117-187; sequence VKIVTVEKKV…REMDELRSYS (71 aa). The Cytoplasmic portion of the chain corresponds to 123 to 208; sequence EKKVNEILNR…QDGNDSDEFM (86 aa). Over residues 145–184 the composition is skewed to basic and acidic residues; that stretch reads EAEKECRDHEERNEKKAQIQEMKRREKEEMKKKREMDELR. Residues 145–208 are disordered; sequence EAEKECRDHE…QDGNDSDEFM (64 aa). A Phosphoserine modification is found at Ser-204.

Belongs to the CCDC25 family. Interacts (via cytoplasmic region) with ILK.

The protein resides in the cell membrane. It localises to the endomembrane system. Its function is as follows. Transmembrane receptor that senses neutrophil extracellular traps (NETs) and triggers the ILK-PARVB pathway to enhance cell motility. NETs are mainly composed of DNA fibers and are released by neutrophils to bind pathogens during inflammation. Formation of NETs is also associated with cancer metastasis, NET-DNA acting as a chemotactic factor to attract cancer cells. Specifically binds NETs on its extracellular region, in particular the 8-OHdG-enriched DNA present in NETs, and recruits ILK, initiating the ILK-PARVB cascade to induce cytoskeleton rearrangement and directional migration of cells. The sequence is that of Coiled-coil domain-containing protein 25 from Bos taurus (Bovine).